The chain runs to 309 residues: Ornithine carbamoyltransferase (309 aa).

Carbamoyl phosphate-binding positions include 56-59 (STRT), glutamine 83, arginine 107, and 134-137 (HPCQ). Residues asparagine 165, aspartate 223, and 227-228 (SM) contribute to the L-ornithine site. Residues 263 to 264 (CL) and arginine 291 each bind carbamoyl phosphate.

It belongs to the aspartate/ornithine carbamoyltransferase superfamily. OTCase family.

Its subcellular location is the cytoplasm. The enzyme catalyses carbamoyl phosphate + L-ornithine = L-citrulline + phosphate + H(+). The protein operates within amino-acid biosynthesis; L-arginine biosynthesis; L-arginine from L-ornithine and carbamoyl phosphate: step 1/3. Reversibly catalyzes the transfer of the carbamoyl group from carbamoyl phosphate (CP) to the N(epsilon) atom of ornithine (ORN) to produce L-citrulline. This is Ornithine carbamoyltransferase from Burkholderia mallei (strain ATCC 23344).